The primary structure comprises 526 residues: Peptide chain release factor 3 (526 aa).

Positions 8–277 (NKRRTFAIIS…GLTEWAPKPQ (270 aa)) constitute a tr-type G domain. GTP is bound by residues 17 to 24 (SHPDAGKT), 85 to 89 (DTPGH), and 139 to 142 (NKLD).

Belongs to the TRAFAC class translation factor GTPase superfamily. Classic translation factor GTPase family. PrfC subfamily.

It is found in the cytoplasm. Functionally, increases the formation of ribosomal termination complexes and stimulates activities of RF-1 and RF-2. It binds guanine nucleotides and has strong preference for UGA stop codons. It may interact directly with the ribosome. The stimulation of RF-1 and RF-2 is significantly reduced by GTP and GDP, but not by GMP. The protein is Peptide chain release factor 3 of Actinobacillus pleuropneumoniae serotype 7 (strain AP76).